Here is a 395-residue protein sequence, read N- to C-terminus: Elongation factor Tu (395 aa).

In terms of domain architecture, tr-type G spans 10–204 (KPHLNIGTIG…TVDNYIKEPI (195 aa)). Positions 19-26 (GHVDHGKT) are G1. 19–26 (GHVDHGKT) provides a ligand contact to GTP. Position 26 (Thr26) interacts with Mg(2+). The tract at residues 60–64 (GITIN) is G2. A G3 region spans residues 81–84 (DCPG). GTP is bound by residues 81–85 (DCPGH) and 136–139 (NKVD). Residues 136–139 (NKVD) form a G4 region. The tract at residues 174–176 (SAL) is G5.

This sequence belongs to the TRAFAC class translation factor GTPase superfamily. Classic translation factor GTPase family. EF-Tu/EF-1A subfamily. As to quaternary structure, monomer.

Its subcellular location is the cytoplasm. The enzyme catalyses GTP + H2O = GDP + phosphate + H(+). GTP hydrolase that promotes the GTP-dependent binding of aminoacyl-tRNA to the A-site of ribosomes during protein biosynthesis. The protein is Elongation factor Tu of Karelsulcia muelleri (strain GWSS) (Sulcia muelleri).